A 383-amino-acid polypeptide reads, in one-letter code: NifS-like protein (383 aa).

Pyridoxal 5'-phosphate-binding positions include 58 to 59 (SE) and 184 to 186 (SLN).

It belongs to the class-V pyridoxal-phosphate-dependent aminotransferase family. NifS/IscS subfamily. Requires pyridoxal 5'-phosphate as cofactor.

Its subcellular location is the virion. This is NifS-like protein from African swine fever virus (isolate Pig/Kenya/KEN-50/1950) (ASFV).